We begin with the raw amino-acid sequence, 111 residues long: Iron-sulfur cluster insertion protein ErpA (111 aa).

The iron-sulfur cluster site is built by Cys-39, Cys-103, and Cys-105.

It belongs to the HesB/IscA family. In terms of assembly, homodimer. The cofactor is iron-sulfur cluster.

Required for insertion of 4Fe-4S clusters for at least IspG. The polypeptide is Iron-sulfur cluster insertion protein ErpA (Buchnera aphidicola subsp. Cinara cedri (strain Cc)).